The primary structure comprises 368 residues: 1-deoxy-D-xylulose 5-phosphate reductoisomerase (368 aa).

Residues threonine 7, glycine 8, serine 9, isoleucine 10, glycine 31, lysine 32, asparagine 33, and asparagine 113 each contribute to the NADPH site. Lysine 114 contacts 1-deoxy-D-xylulose 5-phosphate. Glutamate 115 provides a ligand contact to NADPH. Aspartate 133 serves as a coordination point for Mn(2+). 1-deoxy-D-xylulose 5-phosphate contacts are provided by serine 134, glutamate 135, serine 158, and histidine 181. Residue glutamate 135 coordinates Mn(2+). Glycine 187 lines the NADPH pocket. 4 residues coordinate 1-deoxy-D-xylulose 5-phosphate: serine 194, asparagine 199, lysine 200, and glutamate 203. Glutamate 203 contributes to the Mn(2+) binding site.

It belongs to the DXR family. Mg(2+) is required as a cofactor. The cofactor is Mn(2+).

It catalyses the reaction 2-C-methyl-D-erythritol 4-phosphate + NADP(+) = 1-deoxy-D-xylulose 5-phosphate + NADPH + H(+). Its pathway is isoprenoid biosynthesis; isopentenyl diphosphate biosynthesis via DXP pathway; isopentenyl diphosphate from 1-deoxy-D-xylulose 5-phosphate: step 1/6. Its function is as follows. Catalyzes the NADPH-dependent rearrangement and reduction of 1-deoxy-D-xylulose-5-phosphate (DXP) to 2-C-methyl-D-erythritol 4-phosphate (MEP). This Helicobacter pylori (strain J99 / ATCC 700824) (Campylobacter pylori J99) protein is 1-deoxy-D-xylulose 5-phosphate reductoisomerase.